The sequence spans 595 residues: Aspartate--tRNA(Asp/Asn) ligase (595 aa).

E175 is an L-aspartate binding site. The tract at residues 199–202 (QQYK) is aspartate. Residues R221 and H454 each coordinate L-aspartate. Position 221 to 223 (221 to 223 (RDE)) interacts with ATP. E488 serves as a coordination point for ATP. R495 provides a ligand contact to L-aspartate. 540–543 (GIDR) serves as a coordination point for ATP.

The protein belongs to the class-II aminoacyl-tRNA synthetase family. Type 1 subfamily. Homodimer.

It localises to the cytoplasm. The enzyme catalyses tRNA(Asx) + L-aspartate + ATP = L-aspartyl-tRNA(Asx) + AMP + diphosphate. Its function is as follows. Aspartyl-tRNA synthetase with relaxed tRNA specificity since it is able to aspartylate not only its cognate tRNA(Asp) but also tRNA(Asn). Reaction proceeds in two steps: L-aspartate is first activated by ATP to form Asp-AMP and then transferred to the acceptor end of tRNA(Asp/Asn). This Sinorhizobium fredii (strain NBRC 101917 / NGR234) protein is Aspartate--tRNA(Asp/Asn) ligase.